Reading from the N-terminus, the 456-residue chain is UDP-N-acetylmuramate--L-alanine ligase (456 aa).

Position 118-124 (118-124) interacts with ATP; sequence GTHGKST.

It belongs to the MurCDEF family.

It localises to the cytoplasm. It carries out the reaction UDP-N-acetyl-alpha-D-muramate + L-alanine + ATP = UDP-N-acetyl-alpha-D-muramoyl-L-alanine + ADP + phosphate + H(+). Its pathway is cell wall biogenesis; peptidoglycan biosynthesis. In terms of biological role, cell wall formation. This Paenarthrobacter aurescens (strain TC1) protein is UDP-N-acetylmuramate--L-alanine ligase.